Consider the following 109-residue polypeptide: MVRSDIIRGHLDSIILRLILEKDRYGYEISQEISNRTNNSFQIKEATLYAVFQRLEKKEVIEAYYGDVSDGGKRKYYRITSLGKAYLSELVKEWAEVKEIIDLFMEGLE.

This is an uncharacterized protein from Lysinibacillus sphaericus (Bacillus sphaericus).